A 134-amino-acid polypeptide reads, in one-letter code: IIYPGTLWCGHGNVSSGPNELGRFKHTDACCRTHDMCPDVMSAGESKHGLTNTASHTRLSCDCDDTFYDCLKNSGDKISSYFVGKMYFNLIDTKCYKLEHPVTGCGERTEGRCLRYTVDKSKPKAYQWFDLRKY.

3 residues coordinate Ca(2+): Trp-8, Gly-10, and Gly-12. 5 disulfide bridges follow: Cys-9-Cys-31, Cys-30-Cys-70, Cys-37-Cys-63, Cys-61-Cys-95, and Cys-105-Cys-113. The N-linked (GlcNAc...) asparagine glycan is linked to Asn-13. Residue His-34 is part of the active site. Residue Asp-35 coordinates Ca(2+). Asp-64 is an active-site residue.

This sequence belongs to the phospholipase A2 family. Group III subfamily. It depends on Ca(2+) as a cofactor. In terms of tissue distribution, expressed by the venom gland.

It localises to the secreted. It carries out the reaction a 1,2-diacyl-sn-glycero-3-phosphocholine + H2O = a 1-acyl-sn-glycero-3-phosphocholine + a fatty acid + H(+). In terms of biological role, PLA2 catalyzes the calcium-dependent hydrolysis of the 2-acyl groups in 3-sn-phosphoglycerides. This is Phospholipase A2 from Apis cerana cerana (Oriental honeybee).